We begin with the raw amino-acid sequence, 90 residues long: Envelope protein US9 (90 aa).

Over 1–67 (MTSRLSDPNS…RRRRTRCVGM (67 aa)) the chain is Intravirion. Residues 21–24 (YPTA) carry the Internalization motif motif. The tract at residues 30-39 (EAYYSESEDE) is acidic. A phosphoserine; by host CK2 mark is found at Ser34 and Ser36. A helical; Signal-anchor for type II membrane protein transmembrane segment spans residues 68–88 (VIACLLVAVLSGGFGALLMWL). Topologically, residues 89–90 (LR) are virion surface.

This sequence belongs to the alphaherpesvirinae envelope protein US9 family. Phosphorylated on serines within the acidic cluster, possibly by host CK2. Phosphorylation determines whether endocytosed viral US9 traffics to the trans-Golgi network or recycles to the cell membrane.

The protein localises to the virion membrane. It localises to the host Golgi apparatus membrane. Its subcellular location is the host smooth endoplasmic reticulum membrane. It is found in the host cell membrane. In terms of biological role, essential for the anterograde spread of the infection throughout the host nervous system. Together with the gE/gI heterodimer, US9 is involved in the sorting and transport of viral structural components toward axon tips. This Homo sapiens (Human) protein is Envelope protein US9.